We begin with the raw amino-acid sequence, 536 residues long: DNA damage-binding protein CMR1 (536 aa).

The span at 36 to 45 shows a compositional bias: basic and acidic residues; that stretch reads REAGVDDTHR. The tract at residues 36–72 is disordered; it reads REAGVDDTHRTVVKKKKSPSVSRGRSASPKVAPVATR. 6 WD repeats span residues 195 to 236, 251 to 291, 346 to 386, 403 to 442, 456 to 495, and 496 to 535; these read LVYE…LSEN, FFTK…SNDI, LSDK…KKPE, DSRL…LPDD, GRWT…LAHL, and PTAT…KEEE.

It belongs to the WD repeat DDB2/WDR76 family.

DNA-binding protein that binds to both single- and double-stranded DNA. Binds preferentially to UV-damaged DNA. May be involved in DNA-metabolic processes. The protein is DNA damage-binding protein CMR1 of Vanderwaltozyma polyspora (strain ATCC 22028 / DSM 70294 / BCRC 21397 / CBS 2163 / NBRC 10782 / NRRL Y-8283 / UCD 57-17) (Kluyveromyces polysporus).